Here is a 241-residue protein sequence, read N- to C-terminus: Probable transcriptional regulatory protein Reut_A2522 (241 aa).

It belongs to the TACO1 family.

Its subcellular location is the cytoplasm. The chain is Probable transcriptional regulatory protein Reut_A2522 from Cupriavidus pinatubonensis (strain JMP 134 / LMG 1197) (Cupriavidus necator (strain JMP 134)).